We begin with the raw amino-acid sequence, 119 residues long: Holo-[acyl-carrier-protein] synthase (119 aa).

Mg(2+)-binding residues include Asp-7 and Glu-53.

The protein belongs to the P-Pant transferase superfamily. AcpS family. Mg(2+) is required as a cofactor.

It localises to the cytoplasm. It catalyses the reaction apo-[ACP] + CoA = holo-[ACP] + adenosine 3',5'-bisphosphate + H(+). Its function is as follows. Transfers the 4'-phosphopantetheine moiety from coenzyme A to a Ser of acyl-carrier-protein. The protein is Holo-[acyl-carrier-protein] synthase of Dehalococcoides mccartyi (strain ATCC BAA-2266 / KCTC 15142 / 195) (Dehalococcoides ethenogenes (strain 195)).